A 131-amino-acid chain; its full sequence is Protein yippee-like PJ691.02 (131 aa).

The Yippee domain occupies 12 to 109 (RCYVCAKCKT…LEMQDAVLQR (98 aa)). 4 residues coordinate Zn(2+): C16, C19, C72, and C75.

The protein belongs to the yippee family.

This is Protein yippee-like PJ691.02 from Schizosaccharomyces pombe (strain 972 / ATCC 24843) (Fission yeast).